The following is a 103-amino-acid chain: Large ribosomal subunit protein bL21 (103 aa).

This sequence belongs to the bacterial ribosomal protein bL21 family. Part of the 50S ribosomal subunit. Contacts protein L20.

Functionally, this protein binds to 23S rRNA in the presence of protein L20. The chain is Large ribosomal subunit protein bL21 from Yersinia pseudotuberculosis serotype O:1b (strain IP 31758).